We begin with the raw amino-acid sequence, 281 residues long: DSC E3 ubiquitin ligase complex subunit 4 (281 aa).

The next 4 membrane-spanning stretches (helical) occupy residues 22–42 (LCYA…LLLL), 62–82 (LPLF…RMFF), 84–104 (LPTA…INFI), and 115–135 (FITS…ILIA). The segment covering 145 to 154 (HIQASQSGLS) has biased composition (polar residues). 2 disordered regions span residues 145–183 (HIQA…EDLQ) and 256–281 (NTNS…TNPI). Residues 157–167 (DGDEEPSDLIT) are compositionally biased toward acidic residues. Over residues 168–183 (EDSRDTQQGQRQEDLQ) the composition is skewed to basic and acidic residues.

Component of the DSC E3 ubiquitin ligase complex composed of dsc1, dsc2, dsc3 and dsc4.

Its subcellular location is the endoplasmic reticulum membrane. It localises to the golgi apparatus membrane. It functions in the pathway protein modification; protein ubiquitination. Component of the DSC E3 ubiquitin ligase complex which is required for the sre1 transcriptional activator proteolytic cleavage to release the soluble transcription factor from the membrane in low oxygen or sterol conditions. The complex also plays an important role in the multivesicular body (MVB) pathway and functions in a post-endoplasmic reticulum pathway for protein degradation. This Schizosaccharomyces pombe (strain 972 / ATCC 24843) (Fission yeast) protein is DSC E3 ubiquitin ligase complex subunit 4 (dsc4).